Consider the following 195-residue polypeptide: Thymidylate kinase (195 aa).

ATP is bound at residue 7-14; the sequence is GIDGVGKS.

The protein belongs to the thymidylate kinase family.

The enzyme catalyses dTMP + ATP = dTDP + ADP. In terms of biological role, phosphorylation of dTMP to form dTDP in both de novo and salvage pathways of dTTP synthesis. This Campylobacter concisus (strain 13826) protein is Thymidylate kinase.